Reading from the N-terminus, the 269-residue chain is Ribonuclease HII (269 aa).

In terms of domain architecture, RNase H type-2 spans 61-250; sequence RLVCGVDEAG…VRKMLSPGLE (190 aa). 3 residues coordinate a divalent metal cation: D67, E68, and D158.

The protein belongs to the RNase HII family. It depends on Mn(2+) as a cofactor. Mg(2+) serves as cofactor.

It is found in the cytoplasm. It catalyses the reaction Endonucleolytic cleavage to 5'-phosphomonoester.. Endonuclease that specifically degrades the RNA of RNA-DNA hybrids. The polypeptide is Ribonuclease HII (Parvibaculum lavamentivorans (strain DS-1 / DSM 13023 / NCIMB 13966)).